Reading from the N-terminus, the 81-residue chain is MDREEILQKIQEITADRLGVDESEVTPEASFREDLEADSLDLVELIMELEEAFGMEIPDEEAEKITTVEEAVDYVVEHQTA.

Residues 1 to 79 (MDREEILQKI…EAVDYVVEHQ (79 aa)) form the Carrier domain. Position 39 is an O-(pantetheine 4'-phosphoryl)serine (serine 39).

Belongs to the acyl carrier protein (ACP) family. In terms of processing, 4'-phosphopantetheine is transferred from CoA to a specific serine of apo-ACP by AcpS. This modification is essential for activity because fatty acids are bound in thioester linkage to the sulfhydryl of the prosthetic group.

Its subcellular location is the cytoplasm. It participates in lipid metabolism; fatty acid biosynthesis. Carrier of the growing fatty acid chain in fatty acid biosynthesis. The sequence is that of Acyl carrier protein from Rubrobacter xylanophilus (strain DSM 9941 / JCM 11954 / NBRC 16129 / PRD-1).